Reading from the N-terminus, the 136-residue chain is Small ribosomal subunit protein bS6 (136 aa).

The span at 97–128 (EKEQSAMLSRPDRDDFPGKDEERPRPSRRQYE) shows a compositional bias: basic and acidic residues. Positions 97–136 (EKEQSAMLSRPDRDDFPGKDEERPRPSRRQYEDVVEGGVE) are disordered.

This sequence belongs to the bacterial ribosomal protein bS6 family.

In terms of biological role, binds together with bS18 to 16S ribosomal RNA. The protein is Small ribosomal subunit protein bS6 of Bartonella bacilliformis (strain ATCC 35685 / KC583 / Herrer 020/F12,63).